Consider the following 350-residue polypeptide: TATA box-binding protein-like 2 (350 aa).

The disordered stretch occupies residues 82-150; sequence ENRDQTVTGN…QPSPETPNSN (69 aa). The span at 94-116 shows a compositional bias: basic and acidic residues; that stretch reads ASEESCRTRDRQSQLQLPDEHGS. Composition is skewed to polar residues over residues 118–128 and 139–150; these read LNLNSNSSPDP and SNQPSPETPNSN.

The protein belongs to the TBP family. Interacts with TAF3. In terms of tissue distribution, expressed in myotubes and myofibers (at protein level). Expressed in a wide variety of tissues with highest levels in heart, lung, liver, uterus and placenta and especially the gonads. Expression is higher in the ovary than the testis, and within the ovary expression is localized to the oocytes.

Its subcellular location is the cytoplasm. The protein localises to the nucleus. Transcription factor required in complex with TAF3 for the differentiation of myoblasts into myocytes. The complex replaces TFIID at specific promoters at an early stage in the differentiation process. The polypeptide is TATA box-binding protein-like 2 (Mus musculus (Mouse)).